The primary structure comprises 324 residues: Probable 6-phosphogluconolactonase 4, chloroplastic (324 aa).

The N-terminal 61 residues, 1-61 (MSVSAAVAAA…RAPAMATDCA (61 aa)), are a transit peptide targeting the chloroplast. The disordered stretch occupies residues 20 to 43 (RRRSPPASRVAATSRGRPFSSGPH). The segment covering 24–34 (PPASRVAATSR) has biased composition (low complexity).

It belongs to the glucosamine/galactosamine-6-phosphate isomerase family. 6-phosphogluconolactonase subfamily.

The protein resides in the plastid. The protein localises to the chloroplast. It carries out the reaction 6-phospho-D-glucono-1,5-lactone + H2O = 6-phospho-D-gluconate + H(+). It functions in the pathway carbohydrate degradation; pentose phosphate pathway; D-ribulose 5-phosphate from D-glucose 6-phosphate (oxidative stage): step 2/3. Functionally, hydrolysis of 6-phosphogluconolactone to 6-phosphogluconate. The protein is Probable 6-phosphogluconolactonase 4, chloroplastic of Oryza sativa subsp. indica (Rice).